A 194-amino-acid chain; its full sequence is uncharacterized protein (194 aa).

An N-terminal signal peptide occupies residues Met1–Ala29. Residues Lys104–Asp131 are a coiled coil. Residues Tyr149–Ile171 traverse the membrane as a helical segment.

It localises to the membrane. This is an uncharacterized protein from Bacillus subtilis (strain 168).